The chain runs to 101 residues: uncharacterized protein (101 aa).

The signal sequence occupies residues 1 to 19 (MKFKYLSTPLLFSALLFSA). Residue Cys20 is the site of N-palmitoyl cysteine attachment. Cys20 carries S-diacylglycerol cysteine lipidation.

The protein belongs to the MG439/MG440 family.

The protein resides in the cell membrane. This is an uncharacterized protein from Mycoplasma pneumoniae (strain ATCC 29342 / M129 / Subtype 1) (Mycoplasmoides pneumoniae).